Consider the following 244-residue polypeptide: Ribonuclease P protein component 3 (244 aa).

The protein belongs to the eukaryotic/archaeal RNase P protein component 3 family. Consists of a catalytic RNA component and at least 4-5 protein subunits.

The protein resides in the cytoplasm. The enzyme catalyses Endonucleolytic cleavage of RNA, removing 5'-extranucleotides from tRNA precursor.. Functionally, part of ribonuclease P, a protein complex that generates mature tRNA molecules by cleaving their 5'-ends. The protein is Ribonuclease P protein component 3 of Methanopyrus kandleri (strain AV19 / DSM 6324 / JCM 9639 / NBRC 100938).